A 254-amino-acid polypeptide reads, in one-letter code: Hemin import ATP-binding protein HmuV (254 aa).

Residues 2–239 (LNINQVNINL…DTLSQVWHYD (238 aa)) enclose the ABC transporter domain. ATP is bound at residue 34-41 (GPNGAGKS).

The protein belongs to the ABC transporter superfamily. Heme (hemin) importer (TC 3.A.1.14.5) family. The complex is composed of two ATP-binding proteins (HmuV), two transmembrane proteins (HmuU) and a solute-binding protein (HmuT).

The protein resides in the cell inner membrane. Part of the ABC transporter complex HmuTUV involved in hemin import. Responsible for energy coupling to the transport system. The sequence is that of Hemin import ATP-binding protein HmuV from Shewanella denitrificans (strain OS217 / ATCC BAA-1090 / DSM 15013).